Here is a 114-residue protein sequence, read N- to C-terminus: DNA-binding protein rrnAC3180 (114 aa).

Positions 1–11 (MSGDPSEEELE) are enriched in acidic residues. Residues 1–45 (MSGDPSEEELEELRKKKMEQLKEQQGGEGEGQEAAQQQAEAQKQA) form a disordered region. Residues 12 to 22 (ELRKKKMEQLK) are compositionally biased toward basic and acidic residues. Low complexity predominate over residues 32–45 (QEAAQQQAEAQKQA).

This sequence belongs to the PDCD5 family.

This Haloarcula marismortui (strain ATCC 43049 / DSM 3752 / JCM 8966 / VKM B-1809) (Halobacterium marismortui) protein is DNA-binding protein rrnAC3180.